The following is a 334-amino-acid chain: Serine/threonine-protein kinase SAPK3 (334 aa).

A Protein kinase domain is found at 5 to 261 (YEALKELGAG…IPEIKKHTWF (257 aa)). Residues 11–19 (LGAGNFGVA) and K34 contribute to the ATP site. The Proton acceptor role is filled by D124.

This sequence belongs to the protein kinase superfamily. Ser/Thr protein kinase family. In terms of processing, autophosphorylated in presence of Ca(2+). Expressed in leaves and maturing seeds, but not in roots and stems of field-grown plants.

It is found in the cytoplasm. The protein resides in the nucleus. It carries out the reaction L-seryl-[protein] + ATP = O-phospho-L-seryl-[protein] + ADP + H(+). The enzyme catalyses L-threonyl-[protein] + ATP = O-phospho-L-threonyl-[protein] + ADP + H(+). With respect to regulation, activated by phosphorylation. In terms of biological role, may play a role in signal transduction of hyperosmotic response. The sequence is that of Serine/threonine-protein kinase SAPK3 (SAPK3) from Oryza sativa subsp. indica (Rice).